Reading from the N-terminus, the 736-residue chain is Microtubule-associated protein mu-2 (736 aa).

Belongs to the orthoreovirus mu-2 protein family. In terms of assembly, interacts with protein mu-NS; in viral inclusions. Interacts with polymerase lambda-3; this interaction stimulates the ATPase activity of mu-2. Requires a divalent metal cation as cofactor.

Its subcellular location is the virion. The protein resides in the host cytoplasm. It is found in the host cytoskeleton. Its function is as follows. Minor inner capsid (core) component. Displays NTPase and RNA 5'-triphosphatase (RTPase) activities. ATP is the preferred substrate for hydrolysis. May function as a cofactor of polymerase lambda-3. Associates with microtubules and plays a role in the formation, structural organization and morphology of viral inclusions, where the assembly of cores and the replication of viral RNA occur. Together with mu-NS, recruits the other core proteins to these inclusions. The chain is Microtubule-associated protein mu-2 (M1) from Mammalia (T3D).